Here is a 3183-residue protein sequence, read N- to C-terminus: WD repeat- and FYVE domain-containing protein 4 (3183 aa).

Residues 1-15 (MEAEDLSKTEDRPED) are compositionally biased toward basic and acidic residues. Disordered stretches follow at residues 1–37 (MEAE…EGQS), 790–811 (AGQE…GKFK), 938–977 (KSLH…QALR), and 1828–1852 (KETT…HAAE). A compositionally biased stretch (low complexity) spans 1832–1852 (SESSRNTSSPGASAEASHAAE). The 126-residue stretch at 2383-2508 (LDGEKVSQKV…DRSKALKSFS (126 aa)) folds into the BEACH-type PH domain. The BEACH domain maps to 2525–2819 (NLRKHPGFDR…QIFTKPHPSR (295 aa)). The tract at residues 2812-2836 (FTKPHPSRNTTGKNPGPGKDASTPV) is disordered. WD repeat units follow at residues 2930–2969 (LAAW…GRPR), 2979–3018 (GHTQ…RVAC), 3021–3060 (VHRE…ASIT), 3070–3108 (TCCC…MPVP), and 3150–3183 (KASP…SADG).

Interacts with HSP90AB1. Highly expressed in immune tissues, especially B lymphocytes.

The protein resides in the early endosome. Its subcellular location is the endoplasmic reticulum. Its function is as follows. Plays a critical role in the regulation of cDC1-mediated cross-presentation of viral and tumor antigens in dendritic cells. Mechanistically, acts near the plasma membrane and interacts with endosomal membranes to promote endosomal-to-cytosol antigen trafficking. Also plays a role in B-cell survival through regulation of autophagy. In Mus musculus (Mouse), this protein is WD repeat- and FYVE domain-containing protein 4.